A 457-amino-acid chain; its full sequence is Argininosuccinate lyase (457 aa).

This sequence belongs to the lyase 1 family. Argininosuccinate lyase subfamily.

The protein localises to the cytoplasm. The enzyme catalyses 2-(N(omega)-L-arginino)succinate = fumarate + L-arginine. It functions in the pathway amino-acid biosynthesis; L-arginine biosynthesis; L-arginine from L-ornithine and carbamoyl phosphate: step 3/3. The sequence is that of Argininosuccinate lyase from Erwinia tasmaniensis (strain DSM 17950 / CFBP 7177 / CIP 109463 / NCPPB 4357 / Et1/99).